We begin with the raw amino-acid sequence, 244 residues long: rRNA adenine N-6-methyltransferase (244 aa).

6 residues coordinate S-adenosyl-L-methionine: Asn-11, Ile-13, Gly-38, Glu-59, Asp-84, and Asn-101.

This sequence belongs to the class I-like SAM-binding methyltransferase superfamily. rRNA adenine N(6)-methyltransferase family.

It catalyses the reaction adenosine(2085) in 23S rRNA + 2 S-adenosyl-L-methionine = N(6)-dimethyladenosine(2085) in 23S rRNA + 2 S-adenosyl-L-homocysteine + 2 H(+). Its function is as follows. This protein produces a dimethylation of the adenine residue at position 2085 in 23S rRNA, resulting in reduced affinity between ribosomes and macrolide-lincosamide-streptogramin B antibiotics. Is involved in erythromycin resistance. This Limosilactobacillus reuteri (Lactobacillus reuteri) protein is rRNA adenine N-6-methyltransferase (ermGT).